The primary structure comprises 172 residues: Large ribosomal subunit protein uL10 (172 aa).

This sequence belongs to the universal ribosomal protein uL10 family. Part of the ribosomal stalk of the 50S ribosomal subunit. The N-terminus interacts with L11 and the large rRNA to form the base of the stalk. The C-terminus forms an elongated spine to which L12 dimers bind in a sequential fashion forming a multimeric L10(L12)X complex.

Its function is as follows. Forms part of the ribosomal stalk, playing a central role in the interaction of the ribosome with GTP-bound translation factors. In Rhodopseudomonas palustris (strain BisB5), this protein is Large ribosomal subunit protein uL10.